A 43-amino-acid chain; its full sequence is SPbeta prophage-derived uncharacterized protein YotD (43 aa).

The chain is SPbeta prophage-derived uncharacterized protein YotD (yotD) from Bacillus subtilis (strain 168).